The chain runs to 563 residues: Arginine--tRNA ligase (563 aa).

The 'HIGH' region signature appears at 123–133 (PNIAKDMHVGH).

Belongs to the class-I aminoacyl-tRNA synthetase family. In terms of assembly, monomer.

It is found in the cytoplasm. The catalysed reaction is tRNA(Arg) + L-arginine + ATP = L-arginyl-tRNA(Arg) + AMP + diphosphate. The sequence is that of Arginine--tRNA ligase from Chlamydia trachomatis serovar A (strain ATCC VR-571B / DSM 19440 / HAR-13).